We begin with the raw amino-acid sequence, 292 residues long: Manganese transport system membrane protein MntC (292 aa).

The next 8 membrane-spanning stretches (helical) occupy residues 20–40 (ALTA…FIIL), 58–78 (VVIA…TGVI), 96–116 (SAIG…ITGM), 137–157 (TDLW…ILFY), 168–188 (VMAQ…MLLL), 190–210 (LVTV…MLIT), 226–246 (LCLA…FSVI), and 249–269 (VASG…AFFF).

This sequence belongs to the ABC-3 integral membrane protein family.

The protein resides in the cell membrane. Functionally, this protein is probably a component of a manganese permease, a binding protein-dependent, ATP-driven transport system. The chain is Manganese transport system membrane protein MntC (mntC) from Halalkalibacterium halodurans (strain ATCC BAA-125 / DSM 18197 / FERM 7344 / JCM 9153 / C-125) (Bacillus halodurans).